Here is a 214-residue protein sequence, read N- to C-terminus: Pyridoxine/pyridoxamine 5'-phosphate oxidase (214 aa).

Residues 8–11 (RTNY) and Lys-66 contribute to the substrate site. Residues 61–66 (RIVLIK), 76–77 (FT), Arg-82, Lys-83, and Gln-105 each bind FMN. Positions 123, 127, and 131 each coordinate substrate. FMN is bound by residues 140 to 141 (QS) and Trp-184. 190–192 (RLH) provides a ligand contact to substrate. FMN is bound at residue Arg-194.

The protein belongs to the pyridoxamine 5'-phosphate oxidase family. Homodimer. It depends on FMN as a cofactor.

It carries out the reaction pyridoxamine 5'-phosphate + O2 + H2O = pyridoxal 5'-phosphate + H2O2 + NH4(+). The catalysed reaction is pyridoxine 5'-phosphate + O2 = pyridoxal 5'-phosphate + H2O2. The protein operates within cofactor metabolism; pyridoxal 5'-phosphate salvage; pyridoxal 5'-phosphate from pyridoxamine 5'-phosphate: step 1/1. Its pathway is cofactor metabolism; pyridoxal 5'-phosphate salvage; pyridoxal 5'-phosphate from pyridoxine 5'-phosphate: step 1/1. Functionally, catalyzes the oxidation of either pyridoxine 5'-phosphate (PNP) or pyridoxamine 5'-phosphate (PMP) into pyridoxal 5'-phosphate (PLP). In Burkholderia pseudomallei (strain 1106a), this protein is Pyridoxine/pyridoxamine 5'-phosphate oxidase.